Reading from the N-terminus, the 366-residue chain is MTPEHLPTEQYEAQLAEKVARLQSMMAPFSGLVPEVFRSPVSHYRMRAEFRLWHDGDDLYHIMFDQQTKSRIRVDTFPAASQLINTLMKAMIAGVRDNHALRHKLFQIDYLTTLSNQAVVSLLYHKKLDEEWREAATALRDALRAQGLNVHLIGRATKTKIELDQDYIDERLPVAGKEIIYRQVENSFTQPNAAMNIQMLEWALEVTKDSKGDLLELYCGNGNFSLALARNFNRVLATEIAKPSVAAAQYNIAANHIDNVQIIRMAAEEFTQAMNGVREFNRLQGIDLKRYQCETIFVDPPRSGLDSETEKMVQAYPRILYISCNPETLCKNLETLSQTHTVSRLALFDQFPYTHHMECGVLLTAR.

Residues Gln-190, Tyr-218, Asn-223, Glu-239, and Asp-299 each coordinate S-adenosyl-L-methionine. Cys-324 serves as the catalytic Nucleophile. Glu-358 serves as the catalytic Proton acceptor.

The protein belongs to the class I-like SAM-binding methyltransferase superfamily. RNA M5U methyltransferase family. TrmA subfamily.

It carries out the reaction uridine(54) in tRNA + S-adenosyl-L-methionine = 5-methyluridine(54) in tRNA + S-adenosyl-L-homocysteine + H(+). The enzyme catalyses uridine(341) in tmRNA + S-adenosyl-L-methionine = 5-methyluridine(341) in tmRNA + S-adenosyl-L-homocysteine + H(+). Functionally, dual-specificity methyltransferase that catalyzes the formation of 5-methyluridine at position 54 (m5U54) in all tRNAs, and that of position 341 (m5U341) in tmRNA (transfer-mRNA). The polypeptide is tRNA/tmRNA (uracil-C(5))-methyltransferase (Salmonella paratyphi A (strain ATCC 9150 / SARB42)).